A 105-amino-acid polypeptide reads, in one-letter code: Flagellar transcriptional regulator FlhD (105 aa).

Belongs to the FlhD family. As to quaternary structure, homodimer; disulfide-linked. Forms a heterohexamer composed of two FlhC and four FlhD subunits. Each FlhC binds a FlhD dimer, forming a heterotrimer, and a hexamer assembles by dimerization of two heterotrimers.

The protein resides in the cytoplasm. Its function is as follows. Functions in complex with FlhC as a master transcriptional regulator that regulates transcription of several flagellar and non-flagellar operons by binding to their promoter region. Activates expression of class 2 flagellar genes, including fliA, which is a flagellum-specific sigma factor that turns on the class 3 genes. Also regulates genes whose products function in a variety of physiological pathways. This Ralstonia nicotianae (strain ATCC BAA-1114 / GMI1000) (Ralstonia solanacearum) protein is Flagellar transcriptional regulator FlhD.